The chain runs to 309 residues: Cytochrome c biogenesis protein CcsA (309 aa).

Helical transmembrane passes span 18-38, 43-63, 67-87, 102-122, 148-168, 216-236, 250-267, and 279-299; these read LGIL…GAVF, FFIV…QLLF, ISGH…AWGI, IIPS…CFVL, VMLS…VLFI, SILI…VWAN, TWAF…HMRI, and LATS…FLGI.

Belongs to the CcmF/CycK/Ccl1/NrfE/CcsA family. In terms of assembly, may interact with ccs1.

The protein localises to the cellular thylakoid membrane. Its function is as follows. Required during biogenesis of c-type cytochromes (cytochrome c6 and cytochrome f) at the step of heme attachment. In Prochlorococcus marinus (strain MIT 9312), this protein is Cytochrome c biogenesis protein CcsA.